Reading from the N-terminus, the 747-residue chain is 3',5'-cyclic-AMP phosphodiesterase 4D (747 aa).

The interval 1-28 (MERDTCDVLSRSKSASEETLHSCNEEED) is disordered. The segment covering 14-24 (SASEETLHSCN) has biased composition (basic and acidic residues). S238, S240, S287, and S314 each carry phosphoserine. The tract at residues 282 to 302 (EVEIPSPTQKEKEKKKRPMSQ) is disordered. Positions 325-654 (VKTEQEDVLA…EWYQSTIPQS (330 aa)) constitute a PDEase domain. K326 participates in a covalent cross-link: Glycyl lysine isopeptide (Lys-Gly) (interchain with G-Cter in SUMO). The active-site Proton donor is the H401. A 3',5'-cyclic AMP-binding site is contributed by H401. H401 is an AMP binding site. Zn(2+) is bound by residues H405, H441, D442, and D559. AMP is bound by residues D442, D559, N562, Q610, and F613. Position 442 (D442) interacts with Mg(2+). Position 442 (D442) interacts with Mn(2+). The 3',5'-cyclic AMP site is built by Q610 and F613. Residues 649–747 (STIPQSPSPA…CVPDDCCPDT (99 aa)) are disordered. A compositionally biased stretch (polar residues) spans 701–712 (CSDSKTLCTQDS). Positions 718-734 (PLDEQVEEEAVAEEESQ) are enriched in acidic residues.

This sequence belongs to the cyclic nucleotide phosphodiesterase family. PDE4 subfamily. Homodimer for the long isoforms. Isoforms with truncated N-termini are monomeric. Binds ARRB2. Interacts with PDE4DIP. Identified in a complex composed of RYR1, PDE4D, PKA, FKBP1A and protein phosphatase 1 (PP1). Interacts (via N-terminal region) with SHANK2 (via proline-rich region); the interaction is increased in a PKA-dependent manner. Zn(2+) serves as cofactor. Requires Mg(2+) as cofactor. The cofactor is Mn(2+). Post-translationally, sumoylation of long isoforms by PIAS4 augments their activation by PKA phosphorylation and represses their inhibition by ERK phosphorylation. In terms of tissue distribution, expressed in brain (at protein level). Isoform 7 is detected in heart, brain, lung, kidney and testis.

It is found in the cytoplasm. The protein resides in the membrane. Its subcellular location is the cytoskeleton. The protein localises to the microtubule organizing center. It localises to the centrosome. It is found in the apical cell membrane. The enzyme catalyses 3',5'-cyclic AMP + H2O = AMP + H(+). It participates in purine metabolism; 3',5'-cyclic AMP degradation; AMP from 3',5'-cyclic AMP: step 1/1. With respect to regulation, inhibited by rolipram. Activated by phosphatidic acid. Its function is as follows. Hydrolyzes the second messenger cAMP, which is a key regulator of many important physiological processes. This chain is 3',5'-cyclic-AMP phosphodiesterase 4D (Pde4d), found in Mus musculus (Mouse).